The primary structure comprises 198 residues: Recombination protein RecR (198 aa).

The segment at 57–72 (CSICGNLTESDPCAIC) adopts a C4-type zinc-finger fold. The Toprim domain occupies 80 to 175 (TTILVVEESK…KVTRLAHGLA (96 aa)).

The protein belongs to the RecR family.

Its function is as follows. May play a role in DNA repair. It seems to be involved in an RecBC-independent recombinational process of DNA repair. It may act with RecF and RecO. This chain is Recombination protein RecR, found in Lactococcus lactis subsp. cremoris (strain SK11).